Consider the following 532-residue polypeptide: 3-hydroxy-3-methylglutaryl-coenzyme A reductase 1 (532 aa).

A helical transmembrane segment spans residues 63–83 (FATVVYLVSLFAHPDAPATTT). The linker stretch occupies residues 77–117 (DAPATTTGDDDDGQGGSRRARPAAAEPAPMHGHGGGMMEAD). The disordered stretch occupies residues 78–111 (APATTTGDDDDGQGGSRRARPAAAEPAPMHGHGG). Over residues 98–107 (PAAAEPAPMH) the composition is skewed to low complexity. Positions 118 to 532 (DEEIVAAVAS…SSKDVAKAAS (415 aa)) are catalytic. Catalysis depends on E211, which acts as the Charge relay system. N-linked (GlcNAc...) asparagine glycosylation occurs at N275. Active-site charge relay system residues include K343 and D419. H517 functions as the Proton donor in the catalytic mechanism. N521 is a glycosylation site (N-linked (GlcNAc...) asparagine).

It belongs to the HMG-CoA reductase family.

It is found in the endoplasmic reticulum membrane. It carries out the reaction (R)-mevalonate + 2 NADP(+) + CoA = (3S)-3-hydroxy-3-methylglutaryl-CoA + 2 NADPH + 2 H(+). Its pathway is metabolic intermediate biosynthesis; (R)-mevalonate biosynthesis; (R)-mevalonate from acetyl-CoA: step 3/3. In terms of biological role, catalyzes the synthesis of mevalonate. The specific precursor of all isoprenoid compounds present in plants. This Oryza sativa subsp. japonica (Rice) protein is 3-hydroxy-3-methylglutaryl-coenzyme A reductase 1 (HMG1).